The following is a 505-amino-acid chain: Protein amnionless (505 aa).

The first 20 residues, methionine 1–alanine 20, serve as a signal peptide directing secretion. Over threonine 21 to serine 344 the chain is Extracellular. Residues serine 345–alanine 365 form a helical membrane-spanning segment. The Cytoplasmic segment spans residues histidine 366–isoleucine 505. Positions glycine 451–valine 482 are disordered. The span at glutamate 473 to valine 482 shows a compositional bias: basic and acidic residues.

In terms of tissue distribution, specifically expressed in nephrocytes.

It is found in the cell membrane. Required in the nephrocyte for normal uptake of proteins and elimination of toxins, and for maintenance of endocytic trafficking structures. May function together with Cubn. This Drosophila melanogaster (Fruit fly) protein is Protein amnionless.